A 266-amino-acid chain; its full sequence is Tropinone reductase homolog At1g07440 (266 aa).

NADP(+) is bound at residue 18-42; it reads LVTGGTKGIGHAIVEEFAGFGAVIH. S151 contributes to the substrate binding site. Y164 serves as the catalytic Proton acceptor.

Belongs to the short-chain dehydrogenases/reductases (SDR) family. SDR65C subfamily.

The chain is Tropinone reductase homolog At1g07440 from Arabidopsis thaliana (Mouse-ear cress).